The following is a 167-amino-acid chain: Endothelin-3 (167 aa).

The first 19 residues, 1 to 19 (MELGLWLLLGLTVTSAAAA), serve as a signal peptide directing secretion. A propeptide spanning residues 20-50 (LPAQPGNAGQERGPGRSGDQEEKRVPAHHRP) is cleaved from the precursor. Positions 22–45 (AQPGNAGQERGPGRSGDQEEKRVP) are disordered. 2 disulfide bridges follow: C53–C67 and C55–C63. Residues 74–167 (INTPEQTVPY…KSRTDKVHQP (94 aa)) constitute a propeptide that is removed on maturation. The interval 85–112 (LSNHRGSLRGKRSSGPVPESSQSSPQTR) is disordered. Residues 97 to 109 (SSGPVPESSQSSP) are compositionally biased toward low complexity. The endothelin-like stretch occupies residues 115–135 (CACSGVDDKACAYFCAHVTSY). The segment covering 140–149 (EKAAAEEKQE) has biased composition (basic and acidic residues). Residues 140 to 167 (EKAAAEEKQETGGPRQRLKSRTDKVHQP) form a disordered region.

It belongs to the endothelin/sarafotoxin family.

It is found in the secreted. Its function is as follows. Endothelins are endothelium-derived vasoconstrictor peptides. This Rattus norvegicus (Rat) protein is Endothelin-3 (Edn3).